A 489-amino-acid chain; its full sequence is Rhamnulokinase (489 aa).

Residue 13–17 coordinates ATP; it reads ASSGR. C68 and C222 form a disulfide bridge. Substrate contacts are provided by residues G83 and 236-238; that span reads HDT. D237 (proton acceptor) is an active-site residue. T259 serves as a coordination point for ATP. N296 provides a ligand contact to substrate. Q304 is a binding site for ATP. C353 and C370 are joined by a disulfide. G402 lines the ATP pocket. A disulfide bridge connects residues C413 and C417.

This sequence belongs to the rhamnulokinase family. As to quaternary structure, monomer. Mg(2+) serves as cofactor.

It catalyses the reaction L-rhamnulose + ATP = L-rhamnulose 1-phosphate + ADP + H(+). The protein operates within carbohydrate degradation; L-rhamnose degradation; glycerone phosphate from L-rhamnose: step 2/3. Its function is as follows. Involved in the catabolism of L-rhamnose (6-deoxy-L-mannose). Catalyzes the transfer of the gamma-phosphate group from ATP to the 1-hydroxyl group of L-rhamnulose to yield L-rhamnulose 1-phosphate. This chain is Rhamnulokinase, found in Escherichia coli O127:H6 (strain E2348/69 / EPEC).